Here is a 259-residue protein sequence, read N- to C-terminus: Putative protein-disulfide oxidoreductase RBE_1288 (259 aa).

The N-terminal stretch at M1–E20 is a signal peptide. Positions V25 to P54 are disordered. Residues I33–D42 are compositionally biased toward polar residues. The segment covering E43–P54 has biased composition (low complexity). The Thioredoxin domain maps to Q47 to E251. C104 and C107 are joined by a disulfide.

The protein belongs to the thioredoxin family. DsbA subfamily.

Its subcellular location is the periplasm. Functionally, may be required for disulfide bond formation in some proteins. In Rickettsia bellii (strain RML369-C), this protein is Putative protein-disulfide oxidoreductase RBE_1288.